Here is a 124-residue protein sequence, read N- to C-terminus: Small ribosomal subunit protein uS12 (124 aa).

A disordered region spans residues 1-42 (MPTIQQLVRKGRRPKVNKTKSPALRGNPQQRGVCSRVYTTTP). The span at 9–18 (RKGRRPKVNK) shows a compositional bias: basic residues. Polar residues predominate over residues 27–42 (NPQQRGVCSRVYTTTP). Aspartate 89 is modified (3-methylthioaspartic acid).

This sequence belongs to the universal ribosomal protein uS12 family. Part of the 30S ribosomal subunit. Contacts proteins S8 and S17. May interact with IF1 in the 30S initiation complex.

With S4 and S5 plays an important role in translational accuracy. Its function is as follows. Interacts with and stabilizes bases of the 16S rRNA that are involved in tRNA selection in the A site and with the mRNA backbone. Located at the interface of the 30S and 50S subunits, it traverses the body of the 30S subunit contacting proteins on the other side and probably holding the rRNA structure together. The combined cluster of proteins S8, S12 and S17 appears to hold together the shoulder and platform of the 30S subunit. This is Small ribosomal subunit protein uS12 from Tropheryma whipplei (strain TW08/27) (Whipple's bacillus).